We begin with the raw amino-acid sequence, 397 residues long: Succinate--CoA ligase [ADP-forming] subunit beta (397 aa).

Positions 9–254 (KALLKGYGAP…ETEEDAKEIE (246 aa)) constitute an ATP-grasp domain. ATP is bound by residues lysine 46, 53–55 (GRG), glutamate 109, alanine 112, and glutamate 117. Mg(2+)-binding residues include asparagine 209 and aspartate 223. Residues asparagine 274 and 331–333 (GIM) contribute to the substrate site.

It belongs to the succinate/malate CoA ligase beta subunit family. Heterotetramer of two alpha and two beta subunits. Requires Mg(2+) as cofactor.

The enzyme catalyses succinate + ATP + CoA = succinyl-CoA + ADP + phosphate. It carries out the reaction GTP + succinate + CoA = succinyl-CoA + GDP + phosphate. The protein operates within carbohydrate metabolism; tricarboxylic acid cycle; succinate from succinyl-CoA (ligase route): step 1/1. Its function is as follows. Succinyl-CoA synthetase functions in the citric acid cycle (TCA), coupling the hydrolysis of succinyl-CoA to the synthesis of either ATP or GTP and thus represents the only step of substrate-level phosphorylation in the TCA. The beta subunit provides nucleotide specificity of the enzyme and binds the substrate succinate, while the binding sites for coenzyme A and phosphate are found in the alpha subunit. This is Succinate--CoA ligase [ADP-forming] subunit beta from Rhizobium etli (strain CIAT 652).